The following is a 406-amino-acid chain: Phosphorylase b kinase gamma catalytic chain, liver/testis isoform (406 aa).

Residues 24–291 enclose the Protein kinase domain; the sequence is YDPKDVIGRG…AEQALQHPFF (268 aa). Residues 30 to 38 and lysine 53 contribute to the ATP site; that span reads IGRGVSSVV. Aspartate 153 (proton acceptor) is an active-site residue. The segment at 306 to 330 is calmodulin-binding (domain-N); sequence QRFRVAVWTVLAAGRVALSAHRIRP. The calmodulin-binding (domain-C) stretch occupies residues 346 to 370; that stretch reads VRRLIDNCAFRLYGHWVKKGEQQNR.

The protein belongs to the protein kinase superfamily. CAMK Ser/Thr protein kinase family. As to quaternary structure, hexadecamer of 4 heterotetramers, each composed of alpha, beta, gamma, and delta subunits. Alpha (PHKA1 or PHKA2) and beta (PHKB) are regulatory subunits, gamma (PHKG1 or PHKG2) is the catalytic subunit, and delta is calmodulin.

The enzyme catalyses 2 ATP + phosphorylase b = 2 ADP + phosphorylase a.. Its function is as follows. Catalytic subunit of the phosphorylase b kinase (PHK), which mediates the neural and hormonal regulation of glycogen breakdown (glycogenolysis) by phosphorylating and thereby activating glycogen phosphorylase. May regulate glycogeneolysis in the testis. In vitro, phosphorylates PYGM. The polypeptide is Phosphorylase b kinase gamma catalytic chain, liver/testis isoform (PHKG2) (Bos taurus (Bovine)).